A 148-amino-acid chain; its full sequence is Large ribosomal subunit protein bL9 (148 aa).

It belongs to the bacterial ribosomal protein bL9 family.

Binds to the 23S rRNA. This is Large ribosomal subunit protein bL9 from Syntrophotalea carbinolica (strain DSM 2380 / NBRC 103641 / GraBd1) (Pelobacter carbinolicus).